Consider the following 488-residue polypeptide: Solute carrier family 41 member 3 (488 aa).

2 stretches are compositionally biased toward basic and acidic residues: residues 1–19 (MEGT…RLKE) and 27–36 (DAGRLPKASE). Residues 1-36 (MEGTEARQRRLEGCGRLKELGPLPSHDAGRLPKASE) form a disordered region. 9 consecutive transmembrane segments (helical) span residues 63–83 (LIIG…LSWA), 147–167 (LAVV…ASLM), 189–209 (VITA…IVIG), 220–240 (IATP…LALM), 251–271 (WYLT…WLFI), 284–304 (YGWF…LILS), 377–397 (VLLF…CLVE), 406–426 (IFIL…LYLA), and 450–470 (GLGD…DWLL).

The protein belongs to the SLC41A transporter family.

The protein localises to the mitochondrion inner membrane. The enzyme catalyses Mg(2+)(in) + 2 Na(+)(out) = Mg(2+)(out) + 2 Na(+)(in). In terms of biological role, na(+)/Mg(2+) ion exchanger that acts as a predominant Mg(2+) efflux system at the mitochondrial inner membrane. This chain is Solute carrier family 41 member 3 (Slc41a3), found in Mus musculus (Mouse).